The chain runs to 342 residues: N-acetyl-gamma-glutamyl-phosphate reductase (342 aa).

Residue C149 is part of the active site.

Belongs to the NAGSA dehydrogenase family. Type 1 subfamily.

The protein localises to the cytoplasm. The catalysed reaction is N-acetyl-L-glutamate 5-semialdehyde + phosphate + NADP(+) = N-acetyl-L-glutamyl 5-phosphate + NADPH + H(+). It participates in amino-acid biosynthesis; L-arginine biosynthesis; N(2)-acetyl-L-ornithine from L-glutamate: step 3/4. Functionally, catalyzes the NADPH-dependent reduction of N-acetyl-5-glutamyl phosphate to yield N-acetyl-L-glutamate 5-semialdehyde. The protein is N-acetyl-gamma-glutamyl-phosphate reductase of Rhodobacter capsulatus (strain ATCC BAA-309 / NBRC 16581 / SB1003).